Here is a 362-residue protein sequence, read N- to C-terminus: Caspase activity and apoptosis inhibitor 1 (362 aa).

Positions 1 to 14 (MTGKKSSREKRRKR) are enriched in basic residues. Disordered stretches follow at residues 1–44 (MTGK…SGCG) and 65–101 (TGGG…GSLQ). The span at 19–32 (AAAALAAPDLVPAV) shows a compositional bias: low complexity. Composition is skewed to gly residues over residues 33-44 (GGSGSGSTSGCG) and 65-74 (TGGGSGGSCW). A Phosphoserine modification is found at S89. At T90 the chain carries Phosphothreonine. K105 is covalently cross-linked (Glycyl lysine isopeptide (Lys-Gly) (interchain with G-Cter in SUMO2)). A phosphoserine mark is found at S121 and S204. Disordered regions lie at residues 226–251 (SCVD…GKGE), 269–291 (GPCN…EAGQ), and 309–332 (LAES…DVQP). Over residues 235–251 (RENKQPEGLELKQGKGE) the composition is skewed to basic and acidic residues. Positions 273–282 (EEAAAPEVPE) are enriched in low complexity. Residues 282 to 312 (ENTVQSEAGQIDDLEKDIEKSVNEILGLAES) adopt a coiled-coil conformation. At S313 the chain carries Phosphoserine.

Functionally, anti-apoptotic protein that modulates a caspase-10 dependent mitochondrial caspase-3/9 feedback amplification loop. In Bos taurus (Bovine), this protein is Caspase activity and apoptosis inhibitor 1 (CAAP1).